Here is a 425-residue protein sequence, read N- to C-terminus: Diacetylchitobiose binding protein DasA (425 aa).

The N-terminal stretch at 1 to 20 (MKRKLIAAIGIAGMMVSIAA) is a signal peptide. Cys21 carries N-palmitoyl cysteine lipidation. Residue Cys21 is the site of S-diacylglycerol cysteine attachment.

Belongs to the bacterial solute-binding protein 1 family. The complex is composed of two ATP-binding proteins (MsiK), two transmembrane proteins (DasB and DasC) and a solute-binding protein (DasA).

Its subcellular location is the cell membrane. Part of the ABC transporter complex DasABC-MsiK involved in N,N'-diacetylchitobiose ((GlcNAc)2) uptake. Binds specifically to (GlcNAc)2. Can also bind to GlcNAc, (GlcNAc)3, (GlcNAc)4 and (GlcNAc)5, but it exhibits the highest affinity for (GlcNAc)2. Involved in the control of morphological differentiation. The protein is Diacetylchitobiose binding protein DasA of Streptomyces coelicolor (strain ATCC BAA-471 / A3(2) / M145).